The following is a 325-amino-acid chain: GMP reductase (325 aa).

C173 serves as the catalytic Thioimidate intermediate. Residue 202–225 (IIADGGIRSHGDIAKSVRFGATMV) participates in NADP(+) binding.

Belongs to the IMPDH/GMPR family. GuaC type 2 subfamily.

It carries out the reaction IMP + NH4(+) + NADP(+) = GMP + NADPH + 2 H(+). In terms of biological role, catalyzes the irreversible NADPH-dependent deamination of GMP to IMP. It functions in the conversion of nucleobase, nucleoside and nucleotide derivatives of G to A nucleotides, and in maintaining the intracellular balance of A and G nucleotides. The sequence is that of GMP reductase from Delftia acidovorans (strain DSM 14801 / SPH-1).